Consider the following 484-residue polypeptide: Cathepsin F (484 aa).

The signal sequence occupies residues 1 to 19; that stretch reads MAPWLQLLSLLGLLPGAVA. Residues 20-270 constitute a propeptide, activation peptide; that stretch reads APAQPRAASF…MKQAKSVGDL (251 aa). Residues N160 and N195 are each glycosylated (N-linked (GlcNAc...) asparagine). 2 disulfides stabilise this stretch: C292-C333 and C326-C366. C295 is a catalytic residue. 2 N-linked (GlcNAc...) asparagine glycosylation sites follow: N367 and N378. A disulfide bridge connects residues C424 and C472. H431 is a catalytic residue. A glycan (N-linked (GlcNAc...) asparagine) is linked at N440. The active site involves N451.

Belongs to the peptidase C1 family. High expression levels in heart, skeletal muscle, brain, testis and ovary; moderate levels in prostate, placenta, liver and colon; and no detectable expression in peripheral leukocytes and thymus.

Its subcellular location is the lysosome. The catalysed reaction is The recombinant enzyme cleaves synthetic substrates with Phe and Leu (better than Val) in P2, with high specificity constant (kcat/Km) comparable to that of cathepsin L.. In terms of biological role, thiol protease which is believed to participate in intracellular degradation and turnover of proteins. Has also been implicated in tumor invasion and metastasis. The sequence is that of Cathepsin F (CTSF) from Homo sapiens (Human).